We begin with the raw amino-acid sequence, 534 residues long: Glycerol kinase 5 (534 aa).

ATP contacts are provided by Ser-33 and Thr-34. Arg-103, Asp-280, and Gln-281 together coordinate glycerol. ATP contacts are provided by Thr-302, Gly-345, and Gly-445.

This sequence belongs to the FGGY kinase family. As to expression, expressed predominantly in sebaceous glands.

The protein localises to the cytoplasm. It carries out the reaction glycerol + ATP = sn-glycerol 3-phosphate + ADP + H(+). It participates in polyol metabolism; glycerol degradation via glycerol kinase pathway; sn-glycerol 3-phosphate from glycerol: step 1/1. Skin-specific kinase that plays a key role in glycerol metabolism, catalyzing its phosphorylation to produce sn-glycerol 3-phosphate. Involved in skin-specific regulation of sterol regulatory element-binding protein (SREBP) processing and lipid biosynthesis. The polypeptide is Glycerol kinase 5 (Gk5) (Mus musculus (Mouse)).